The following is a 320-amino-acid chain: Ribosomal RNA small subunit methyltransferase H (320 aa).

S-adenosyl-L-methionine contacts are provided by residues 42–44 (GGH), Asp-62, Phe-86, Asp-108, and Gln-115.

It belongs to the methyltransferase superfamily. RsmH family.

The protein localises to the cytoplasm. It catalyses the reaction cytidine(1402) in 16S rRNA + S-adenosyl-L-methionine = N(4)-methylcytidine(1402) in 16S rRNA + S-adenosyl-L-homocysteine + H(+). In terms of biological role, specifically methylates the N4 position of cytidine in position 1402 (C1402) of 16S rRNA. This chain is Ribosomal RNA small subunit methyltransferase H, found in Yersinia pseudotuberculosis serotype O:1b (strain IP 31758).